The primary structure comprises 125 residues: Major intrinsically disordered NOTCH2-binding receptor 1-like (125 aa).

Asn37 is a glycosylation site (N-linked (GlcNAc...) asparagine). A helical membrane pass occupies residues 100-120 (FAFITLFVCAVVIIITVPIVV).

Belongs to the MINAR family. Interacts with NOTCH2. Highly expressed in the auditory hair cells.

The protein localises to the lysosome membrane. It is found in the endoplasmic reticulum membrane. Its function is as follows. Binds cholesterol and may regulate the distribution and homeostasis of cholesterol in hair cells. May play a role in angiogenesis. The protein is Major intrinsically disordered NOTCH2-binding receptor 1-like of Danio rerio (Zebrafish).